The primary structure comprises 462 residues: Glutamate--tRNA ligase 2 (462 aa).

Positions 8 to 18 match the 'HIGH' region motif; that stretch reads PSPTGLLHVGG. The 'KMSKS' region signature appears at 227 to 231; that stretch reads PLSKR. Lys230 serves as a coordination point for ATP.

This sequence belongs to the class-I aminoacyl-tRNA synthetase family. Glutamate--tRNA ligase type 1 subfamily. In terms of assembly, monomer.

It is found in the cytoplasm. The catalysed reaction is tRNA(Glu) + L-glutamate + ATP = L-glutamyl-tRNA(Glu) + AMP + diphosphate. Its function is as follows. Catalyzes the attachment of glutamate to tRNA(Glu) in a two-step reaction: glutamate is first activated by ATP to form Glu-AMP and then transferred to the acceptor end of tRNA(Glu). The polypeptide is Glutamate--tRNA ligase 2 (Thermosipho melanesiensis (strain DSM 12029 / CIP 104789 / BI429)).